The primary structure comprises 284 residues: Bifunctional protein FolD (284 aa).

NADP(+) is bound by residues 164–166 (GRS) and Ser189.

It belongs to the tetrahydrofolate dehydrogenase/cyclohydrolase family. Homodimer.

It catalyses the reaction (6R)-5,10-methylene-5,6,7,8-tetrahydrofolate + NADP(+) = (6R)-5,10-methenyltetrahydrofolate + NADPH. It carries out the reaction (6R)-5,10-methenyltetrahydrofolate + H2O = (6R)-10-formyltetrahydrofolate + H(+). It participates in one-carbon metabolism; tetrahydrofolate interconversion. In terms of biological role, catalyzes the oxidation of 5,10-methylenetetrahydrofolate to 5,10-methenyltetrahydrofolate and then the hydrolysis of 5,10-methenyltetrahydrofolate to 10-formyltetrahydrofolate. This is Bifunctional protein FolD from Listeria monocytogenes serovar 1/2a (strain ATCC BAA-679 / EGD-e).